The sequence spans 103 residues: Large ribosomal subunit protein bL21 (103 aa).

Belongs to the bacterial ribosomal protein bL21 family. Part of the 50S ribosomal subunit. Contacts protein L20.

Its function is as follows. This protein binds to 23S rRNA in the presence of protein L20. This is Large ribosomal subunit protein bL21 from Acidovorax sp. (strain JS42).